The primary structure comprises 160 residues: Transcription antitermination protein NusB (160 aa).

This sequence belongs to the NusB family.

Functionally, involved in transcription antitermination. Required for transcription of ribosomal RNA (rRNA) genes. Binds specifically to the boxA antiterminator sequence of the ribosomal RNA (rrn) operons. This Allorhizobium ampelinum (strain ATCC BAA-846 / DSM 112012 / S4) (Agrobacterium vitis (strain S4)) protein is Transcription antitermination protein NusB.